The primary structure comprises 323 residues: DNA-directed RNA polymerase subunit alpha 1 (323 aa).

Residues 1–228 (MSNNNSKLEF…EQISVFVSLR (228 aa)) are alpha N-terminal domain (alpha-NTD). The segment at 244–323 (IDPILLKPID…DNFRELVEGK (80 aa)) is alpha C-terminal domain (alpha-CTD).

The protein belongs to the RNA polymerase alpha chain family. Homodimer. The RNAP catalytic core consists of 2 alpha, 1 beta, 1 beta' and 1 omega subunit. When a sigma factor is associated with the core the holoenzyme is formed, which can initiate transcription.

It catalyses the reaction RNA(n) + a ribonucleoside 5'-triphosphate = RNA(n+1) + diphosphate. In terms of biological role, DNA-dependent RNA polymerase catalyzes the transcription of DNA into RNA using the four ribonucleoside triphosphates as substrates. The polypeptide is DNA-directed RNA polymerase subunit alpha 1 (Francisella tularensis subsp. tularensis (strain FSC 198)).